The sequence spans 593 residues: Uncoordinated protein 58 (593 aa).

6 helical membrane-spanning segments follow: residues Val-186–Leu-206, Thr-291–Val-311, Val-320–Ile-340, Pro-402–Ile-422, Phe-430–Val-450, and Ile-455–Val-475.

Belongs to the two pore domain potassium channel (TC 1.A.1.8) family.

It is found in the membrane. Functionally, has a role in mobility, possibly in the transport of potassium in muscles. This Caenorhabditis briggsae protein is Uncoordinated protein 58.